The chain runs to 298 residues: Putative S-adenosyl-L-methionine-dependent methyltransferase MAV_0778 (298 aa).

S-adenosyl-L-methionine is bound by residues Asp124 and Asp153 to Leu154.

Belongs to the UPF0677 family.

Exhibits S-adenosyl-L-methionine-dependent methyltransferase activity. This chain is Putative S-adenosyl-L-methionine-dependent methyltransferase MAV_0778, found in Mycobacterium avium (strain 104).